The sequence spans 276 residues: Shikimate dehydrogenase (NADP(+)) (276 aa).

Shikimate contacts are provided by residues 15–17 and Thr-62; that span reads SKS. Lys-66 serves as the catalytic Proton acceptor. Asn-87 and Asp-103 together coordinate shikimate. Residues 127-131, 151-156, and Met-215 contribute to the NADP(+) site; these read GAGGA and NRTLSK. Tyr-217 is a binding site for shikimate. Position 239 (Gly-239) interacts with NADP(+).

Belongs to the shikimate dehydrogenase family. As to quaternary structure, homodimer.

It carries out the reaction shikimate + NADP(+) = 3-dehydroshikimate + NADPH + H(+). The protein operates within metabolic intermediate biosynthesis; chorismate biosynthesis; chorismate from D-erythrose 4-phosphate and phosphoenolpyruvate: step 4/7. Involved in the biosynthesis of the chorismate, which leads to the biosynthesis of aromatic amino acids. Catalyzes the reversible NADPH linked reduction of 3-dehydroshikimate (DHSA) to yield shikimate (SA). The protein is Shikimate dehydrogenase (NADP(+)) of Cellvibrio japonicus (strain Ueda107) (Pseudomonas fluorescens subsp. cellulosa).